Here is a 425-residue protein sequence, read N- to C-terminus: tRNA(Ile)-lysidine synthase (425 aa).

Residue 27-32 (SGGLDS) participates in ATP binding.

This sequence belongs to the tRNA(Ile)-lysidine synthase family.

It localises to the cytoplasm. It carries out the reaction cytidine(34) in tRNA(Ile2) + L-lysine + ATP = lysidine(34) in tRNA(Ile2) + AMP + diphosphate + H(+). In terms of biological role, ligates lysine onto the cytidine present at position 34 of the AUA codon-specific tRNA(Ile) that contains the anticodon CAU, in an ATP-dependent manner. Cytidine is converted to lysidine, thus changing the amino acid specificity of the tRNA from methionine to isoleucine. This Streptococcus gordonii (strain Challis / ATCC 35105 / BCRC 15272 / CH1 / DL1 / V288) protein is tRNA(Ile)-lysidine synthase.